A 198-amino-acid polypeptide reads, in one-letter code: RNA-free ribonuclease P (198 aa).

This sequence belongs to the HARP family.

The enzyme catalyses Endonucleolytic cleavage of RNA, removing 5'-extranucleotides from tRNA precursor.. Its function is as follows. RNA-free RNase P that catalyzes the removal of the 5'-leader sequence from pre-tRNA to produce the mature 5'-terminus. The protein is RNA-free ribonuclease P of Thermococcus kodakarensis (strain ATCC BAA-918 / JCM 12380 / KOD1) (Pyrococcus kodakaraensis (strain KOD1)).